The following is a 732-amino-acid chain: Phosphoribosylformylglycinamidine synthase subunit PurL (732 aa).

His32 is an active-site residue. Tyr35 provides a ligand contact to ATP. Glu81 contacts Mg(2+). Substrate is bound by residues 82-85 (SHNH) and Arg104. His83 acts as the Proton acceptor in catalysis. A Mg(2+)-binding site is contributed by Asp105. Position 230 (Gln230) interacts with substrate. Asp258 provides a ligand contact to Mg(2+). Position 302–304 (302–304 (ESQ)) interacts with substrate. 2 residues coordinate ATP: Asp485 and Gly522. Asn523 serves as a coordination point for Mg(2+). Substrate is bound at residue Ser525.

It belongs to the FGAMS family. As to quaternary structure, monomer. Part of the FGAM synthase complex composed of 1 PurL, 1 PurQ and 2 PurS subunits.

Its subcellular location is the cytoplasm. The catalysed reaction is N(2)-formyl-N(1)-(5-phospho-beta-D-ribosyl)glycinamide + L-glutamine + ATP + H2O = 2-formamido-N(1)-(5-O-phospho-beta-D-ribosyl)acetamidine + L-glutamate + ADP + phosphate + H(+). The protein operates within purine metabolism; IMP biosynthesis via de novo pathway; 5-amino-1-(5-phospho-D-ribosyl)imidazole from N(2)-formyl-N(1)-(5-phospho-D-ribosyl)glycinamide: step 1/2. Functionally, part of the phosphoribosylformylglycinamidine synthase complex involved in the purines biosynthetic pathway. Catalyzes the ATP-dependent conversion of formylglycinamide ribonucleotide (FGAR) and glutamine to yield formylglycinamidine ribonucleotide (FGAM) and glutamate. The FGAM synthase complex is composed of three subunits. PurQ produces an ammonia molecule by converting glutamine to glutamate. PurL transfers the ammonia molecule to FGAR to form FGAM in an ATP-dependent manner. PurS interacts with PurQ and PurL and is thought to assist in the transfer of the ammonia molecule from PurQ to PurL. The protein is Phosphoribosylformylglycinamidine synthase subunit PurL of Methanococcus aeolicus (strain ATCC BAA-1280 / DSM 17508 / OCM 812 / Nankai-3).